The primary structure comprises 399 residues: Tyrosine--tRNA ligase (399 aa).

L-tyrosine is bound at residue Tyr-36. The short motif at 41-50 is the 'HIGH' region element; that stretch reads PTAPSLHIGN. Residues Tyr-166 and Gln-170 each contribute to the L-tyrosine site. A 'KMSKS' region motif is present at residues 226–230; that stretch reads KMGKS. Lys-229 contributes to the ATP binding site. Residues 332–395 form the S4 RNA-binding domain; that stretch reads TRLVDVIVDL…KKRFVTVQVI (64 aa).

This sequence belongs to the class-I aminoacyl-tRNA synthetase family. TyrS type 1 subfamily. In terms of assembly, homodimer.

It is found in the cytoplasm. It catalyses the reaction tRNA(Tyr) + L-tyrosine + ATP = L-tyrosyl-tRNA(Tyr) + AMP + diphosphate + H(+). Its function is as follows. Catalyzes the attachment of tyrosine to tRNA(Tyr) in a two-step reaction: tyrosine is first activated by ATP to form Tyr-AMP and then transferred to the acceptor end of tRNA(Tyr). The protein is Tyrosine--tRNA ligase of Mycoplasma pneumoniae (strain ATCC 29342 / M129 / Subtype 1) (Mycoplasmoides pneumoniae).